The following is a 58-amino-acid chain: Small ribosomal subunit protein bS21C (58 aa).

Residues 38-58 are disordered; it reads YEKPSLRRKRKAEAARKGGRY. Basic and acidic residues predominate over residues 49 to 58; sequence AEAARKGGRY.

Belongs to the bacterial ribosomal protein bS21 family.

This is Small ribosomal subunit protein bS21C (rpsU3) from Nostoc sp. (strain PCC 7120 / SAG 25.82 / UTEX 2576).